The sequence spans 250 residues: Small ribosomal subunit protein uS3 (250 aa).

Residues 39-111 (IRQLINNFSK…DINLNILEVK (73 aa)) form the KH type-2 domain.

Belongs to the universal ribosomal protein uS3 family. In terms of assembly, part of the 30S ribosomal subunit. Forms a tight complex with proteins S10 and S14.

Functionally, binds the lower part of the 30S subunit head. Binds mRNA in the 70S ribosome, positioning it for translation. The polypeptide is Small ribosomal subunit protein uS3 (Phytoplasma australiense).